The following is a 117-amino-acid chain: Regulator of ribonuclease activity B (117 aa).

Belongs to the RraB family. Interacts with the C-terminal region of Rne.

It is found in the cytoplasm. Globally modulates RNA abundance by binding to RNase E (Rne) and regulating its endonucleolytic activity. Can modulate Rne action in a substrate-dependent manner by altering the composition of the degradosome. In Pseudoalteromonas atlantica (strain T6c / ATCC BAA-1087), this protein is Regulator of ribonuclease activity B.